The following is a 153-amino-acid chain: MARNVLYPLYQLGGPQLRVFRTNFFIQLVRPGTAQPEDTVQFRIPMEMTRVDLRNYLERIYNVPVAAVRTRVQHGSHRKRDHRNVRIKKPDYKVAYVQLAHGQTFTFPDLFPEKDPRLEGSSVDEAQSTFMADEQQRQGSDPQRGGVPNWFSL.

Residues 131–153 form a disordered region; the sequence is MADEQQRQGSDPQRGGVPNWFSL.

This sequence belongs to the universal ribosomal protein uL23 family. Component of the mitochondrial ribosome large subunit (39S) which comprises a 16S rRNA and about 50 distinct proteins.

The protein localises to the mitochondrion. In Otolemur garnettii (Small-eared galago), this protein is Large ribosomal subunit protein uL23m (MRPL23).